A 148-amino-acid chain; its full sequence is D-aminoacyl-tRNA deacylase (148 aa).

The short motif at 136 to 137 (GP) is the Gly-cisPro motif, important for rejection of L-amino acids element.

Belongs to the DTD family. In terms of assembly, homodimer.

Its subcellular location is the cytoplasm. The enzyme catalyses glycyl-tRNA(Ala) + H2O = tRNA(Ala) + glycine + H(+). It catalyses the reaction a D-aminoacyl-tRNA + H2O = a tRNA + a D-alpha-amino acid + H(+). Its function is as follows. An aminoacyl-tRNA editing enzyme that deacylates mischarged D-aminoacyl-tRNAs. Also deacylates mischarged glycyl-tRNA(Ala), protecting cells against glycine mischarging by AlaRS. Acts via tRNA-based rather than protein-based catalysis; rejects L-amino acids rather than detecting D-amino acids in the active site. By recycling D-aminoacyl-tRNA to D-amino acids and free tRNA molecules, this enzyme counteracts the toxicity associated with the formation of D-aminoacyl-tRNA entities in vivo and helps enforce protein L-homochirality. This is D-aminoacyl-tRNA deacylase from Streptococcus mutans serotype c (strain ATCC 700610 / UA159).